We begin with the raw amino-acid sequence, 532 residues long: MTKYIFVTGGVVSSIGKGITAASLGRLLKNRGLSVTIQKFDPYINVDPGTMSPYQHGEVYVTDDGAETDLDLGHYERFIDINLNKYSNVTTGKVYSEVIKKERRGDYLGGTVQVIPHITNELKDRVFRAARMTNSDIIITEIGGTVGDIESLPFLEAIRQIKSDVGAENVLYIHTTLIPYIKAAGEMKTKPTQHSVKELRSLGIQPNIIVVRTEQPVSQEMKDKIALFCDIKASEVIESRDEETLYNVPLSLQKQKMDDIVLEHLQLEAPQAEMTDWKNLVHRVKNLSKKVRIGLVGKYVSLQDAYLSVAEALRHAGYDHDAEIEIDWIDSEKVTKENVAEIMKDVDGILVPGGFGDRAIEGKIAAIEYARVNKVPYFGICLGMQLATVEFARNVLGLEGAHSAEIEPETKHNIIDLLPEQKNIENMGGTLRLGLYPARIKQGTKAEAAYGTTLVEERHRHRYEFNNEYREQMEEAGMIVSATSPDGRLVEVVELADHPWFVACQYHPEFISRPNRPQSLFKDFVGAALNNK.

The tract at residues 1-267 (MTKYIFVTGG…DDIVLEHLQL (267 aa)) is amidoligase domain. Serine 13 serves as a coordination point for CTP. Serine 13 contributes to the UTP binding site. 14 to 19 (SIGKGI) contacts ATP. L-glutamine is bound at residue tyrosine 54. Aspartate 71 is an ATP binding site. The Mg(2+) site is built by aspartate 71 and glutamate 141. CTP-binding positions include 148–150 (DIE), 188–193 (KTKPTQ), and lysine 224. UTP-binding positions include 188–193 (KTKPTQ) and lysine 224. The Glutamine amidotransferase type-1 domain maps to 292–532 (RIGLVGKYVS…DFVGAALNNK (241 aa)). L-glutamine is bound at residue glycine 354. Cysteine 381 functions as the Nucleophile; for glutamine hydrolysis in the catalytic mechanism. Residues 382-385 (LGMQ), glutamate 405, and arginine 462 contribute to the L-glutamine site. Catalysis depends on residues histidine 507 and glutamate 509.

Belongs to the CTP synthase family. In terms of assembly, homotetramer.

The enzyme catalyses UTP + L-glutamine + ATP + H2O = CTP + L-glutamate + ADP + phosphate + 2 H(+). The catalysed reaction is L-glutamine + H2O = L-glutamate + NH4(+). It catalyses the reaction UTP + NH4(+) + ATP = CTP + ADP + phosphate + 2 H(+). Its pathway is pyrimidine metabolism; CTP biosynthesis via de novo pathway; CTP from UDP: step 2/2. Its activity is regulated as follows. Allosterically activated by GTP, when glutamine is the substrate; GTP has no effect on the reaction when ammonia is the substrate. The allosteric effector GTP functions by stabilizing the protein conformation that binds the tetrahedral intermediate(s) formed during glutamine hydrolysis. Inhibited by the product CTP, via allosteric rather than competitive inhibition. In terms of biological role, catalyzes the ATP-dependent amination of UTP to CTP with either L-glutamine or ammonia as the source of nitrogen. Regulates intracellular CTP levels through interactions with the four ribonucleotide triphosphates. The chain is CTP synthase from Listeria monocytogenes serotype 4b (strain F2365).